A 511-amino-acid polypeptide reads, in one-letter code: V-type proton ATPase subunit B, brain isoform (511 aa).

Residue arginine 400 coordinates ATP.

Belongs to the ATPase alpha/beta chains family. In terms of assembly, V-ATPase is a heteromultimeric enzyme made up of two complexes: the ATP-hydrolytic V1 complex and the proton translocation V0 complex. The V1 complex consists of three catalytic AB heterodimers that form a heterohexamer, three peripheral stalks each consisting of EG heterodimers, one central rotor including subunits D and F, and the regulatory subunits C and H. The proton translocation complex V0 consists of the proton transport subunit a, a ring of proteolipid subunits c9c'', rotary subunit d, subunits e and f, and the accessory subunits ATP6AP1/Ac45 and ATP6AP2/PRR. Expressed in brain (at protein level). Expressed in all tissues tested, but highest in brain and in adrenal medulla.

Its subcellular location is the apical cell membrane. The protein resides in the melanosome. It localises to the cytoplasm. The protein localises to the cytoplasmic vesicle. It is found in the clathrin-coated vesicle membrane. Its subcellular location is the secretory vesicle. The protein resides in the synaptic vesicle membrane. In terms of biological role, non-catalytic subunit of the V1 complex of vacuolar(H+)-ATPase (V-ATPase), a multisubunit enzyme composed of a peripheral complex (V1) that hydrolyzes ATP and a membrane integral complex (V0) that translocates protons. V-ATPase is responsible for acidifying and maintaining the pH of intracellular compartments and in some cell types, is targeted to the plasma membrane, where it is responsible for acidifying the extracellular environment. In renal intercalated cells, can partially compensate the lack of ATP6V1B1 and mediate secretion of protons (H+) into the urine under base-line conditions but not in conditions of acid load. This Bos taurus (Bovine) protein is V-type proton ATPase subunit B, brain isoform (ATP6V1B2).